Here is a 1605-residue protein sequence, read N- to C-terminus: Pentafunctional AROM polypeptide (1605 aa).

The interval 1–384 (MTGPTKISIL…YEPRASVVPN (384 aa)) is 3-dehydroquinate synthase. Residues 44-46 (DTN), 81-84 (EVSK), 114-116 (GGV), and Asp119 each bind NAD(+). Arg130 provides a ligand contact to 7-phospho-2-dehydro-3-deoxy-D-arabino-heptonate. 139–140 (TT) serves as a coordination point for NAD(+). Asp146 and Lys152 together coordinate 7-phospho-2-dehydro-3-deoxy-D-arabino-heptonate. NAD(+) is bound at residue Lys161. Residue Asn162 participates in 7-phospho-2-dehydro-3-deoxy-D-arabino-heptonate binding. NAD(+) is bound by residues 179-182 (FLET) and Asn190. Residue Glu194 participates in Zn(2+) binding. 7-phospho-2-dehydro-3-deoxy-D-arabino-heptonate-binding positions include 194–197 (EVIK) and Lys250. Glu260 acts as the Proton acceptor; for 3-dehydroquinate synthase activity in catalysis. 7-phospho-2-dehydro-3-deoxy-D-arabino-heptonate-binding positions include 264 to 268 (RNLLN) and His271. His271 lines the Zn(2+) pocket. His275 (proton acceptor; for 3-dehydroquinate synthase activity) is an active-site residue. 7-phospho-2-dehydro-3-deoxy-D-arabino-heptonate-binding residues include His287 and Lys356. Residue His287 participates in Zn(2+) binding. Residues 397–842 (VHPGVSTTSE…WDTLRQKFAV (446 aa)) form an EPSP synthase region. The active-site For EPSP synthase activity is the Cys824. Residues 864 to 1055 (SASVFIIGMR…KKKQHSFFVS (192 aa)) form a shikimate kinase region. Residue 871–878 (GMRGAGKT) participates in ATP binding. The interval 1056 to 1276 (LTLPDVRGAD…AAPGQLSATD (221 aa)) is 3-dehydroquinase. His1179 functions as the Proton acceptor; for 3-dehydroquinate dehydratase activity in the catalytic mechanism. Lys1207 acts as the Schiff-base intermediate with substrate; for 3-dehydroquinate dehydratase activity in catalysis. A shikimate dehydrogenase region spans residues 1289–1605 (KKRFALFGSP…LSGRTMLTCS (317 aa)).

The protein in the N-terminal section; belongs to the sugar phosphate cyclases superfamily. Dehydroquinate synthase family. It in the 2nd section; belongs to the EPSP synthase family. This sequence in the 3rd section; belongs to the shikimate kinase family. In the 4th section; belongs to the type-I 3-dehydroquinase family. The protein in the C-terminal section; belongs to the shikimate dehydrogenase family. Homodimer. Zn(2+) is required as a cofactor.

The protein localises to the cytoplasm. The catalysed reaction is 7-phospho-2-dehydro-3-deoxy-D-arabino-heptonate = 3-dehydroquinate + phosphate. It catalyses the reaction 3-dehydroquinate = 3-dehydroshikimate + H2O. It carries out the reaction shikimate + NADP(+) = 3-dehydroshikimate + NADPH + H(+). The enzyme catalyses shikimate + ATP = 3-phosphoshikimate + ADP + H(+). The catalysed reaction is 3-phosphoshikimate + phosphoenolpyruvate = 5-O-(1-carboxyvinyl)-3-phosphoshikimate + phosphate. It functions in the pathway metabolic intermediate biosynthesis; chorismate biosynthesis; chorismate from D-erythrose 4-phosphate and phosphoenolpyruvate: step 2/7. It participates in metabolic intermediate biosynthesis; chorismate biosynthesis; chorismate from D-erythrose 4-phosphate and phosphoenolpyruvate: step 3/7. Its pathway is metabolic intermediate biosynthesis; chorismate biosynthesis; chorismate from D-erythrose 4-phosphate and phosphoenolpyruvate: step 4/7. The protein operates within metabolic intermediate biosynthesis; chorismate biosynthesis; chorismate from D-erythrose 4-phosphate and phosphoenolpyruvate: step 5/7. It functions in the pathway metabolic intermediate biosynthesis; chorismate biosynthesis; chorismate from D-erythrose 4-phosphate and phosphoenolpyruvate: step 6/7. In terms of biological role, the AROM polypeptide catalyzes 5 consecutive enzymatic reactions in prechorismate polyaromatic amino acid biosynthesis. This Aspergillus fumigatus (strain CBS 144.89 / FGSC A1163 / CEA10) (Neosartorya fumigata) protein is Pentafunctional AROM polypeptide.